A 291-amino-acid polypeptide reads, in one-letter code: uncharacterized protein (291 aa).

The disordered stretch occupies residues 1–55 (MRTHDIPRSPLVGHKKNAAPDGIGASRACCPARENEPFKKGSTNSRGGGVEWSRS). 2 consecutive transmembrane segments (helical) span residues 74–96 (WWAV…PVHA) and 188–210 (YYYL…RIRL).

The protein to T.pallidum TP_0733.

Its subcellular location is the cell membrane. This is an uncharacterized protein from Treponema pallidum (strain Nichols).